The following is a 121-amino-acid chain: Small ribosomal subunit protein uS13 (121 aa).

The interval Gly-94–Lys-121 is disordered.

The protein belongs to the universal ribosomal protein uS13 family. Part of the 30S ribosomal subunit. Forms a loose heterodimer with protein S19. Forms two bridges to the 50S subunit in the 70S ribosome.

Located at the top of the head of the 30S subunit, it contacts several helices of the 16S rRNA. In the 70S ribosome it contacts the 23S rRNA (bridge B1a) and protein L5 of the 50S subunit (bridge B1b), connecting the 2 subunits; these bridges are implicated in subunit movement. Contacts the tRNAs in the A and P-sites. This is Small ribosomal subunit protein uS13 from Ralstonia nicotianae (strain ATCC BAA-1114 / GMI1000) (Ralstonia solanacearum).